A 374-amino-acid polypeptide reads, in one-letter code: Serpin B8 (374 aa).

It belongs to the serpin family. Ov-serpin subfamily.

Its subcellular location is the cytoplasm. Functionally, has an important role in epithelial desmosome-mediated cell-cell adhesion. The protein is Serpin B8 (SERPINB8) of Bos taurus (Bovine).